A 203-amino-acid chain; its full sequence is Urease accessory protein UreG (203 aa).

14 to 21 (GPVGSGKT) is a GTP binding site.

It belongs to the SIMIBI class G3E GTPase family. UreG subfamily. As to quaternary structure, homodimer. UreD, UreF and UreG form a complex that acts as a GTP-hydrolysis-dependent molecular chaperone, activating the urease apoprotein by helping to assemble the nickel containing metallocenter of UreC. The UreE protein probably delivers the nickel.

It is found in the cytoplasm. Its function is as follows. Facilitates the functional incorporation of the urease nickel metallocenter. This process requires GTP hydrolysis, probably effectuated by UreG. The sequence is that of Urease accessory protein UreG from Rhizobium rhizogenes (strain K84 / ATCC BAA-868) (Agrobacterium radiobacter).